Reading from the N-terminus, the 793-residue chain is Alanine--tRNA ligase, mitochondrial (793 aa).

ATP-binding positions include arginine 88, tryptophan 187, and 224-226 (IWN). Asparagine 226 and aspartate 249 together coordinate L-alanine. Position 253 (glycine 253) interacts with ATP. The Zn(2+) site is built by histidine 594, histidine 598, cysteine 706, and histidine 710.

This sequence belongs to the class-II aminoacyl-tRNA synthetase family. As to quaternary structure, monomer. Zn(2+) is required as a cofactor.

It is found in the mitochondrion. It catalyses the reaction tRNA(Ala) + L-alanine + ATP = L-alanyl-tRNA(Ala) + AMP + diphosphate. In terms of biological role, catalyzes the attachment of alanine to tRNA(Ala) in a two-step reaction: alanine is first activated by ATP to form Ala-AMP and then transferred to the acceptor end of tRNA(Ala). Also edits incorrectly charged tRNA(Ala) via its editing domain. The sequence is that of Alanine--tRNA ligase, mitochondrial from Caenorhabditis elegans.